Here is a 231-residue protein sequence, read N- to C-terminus: Protein INCA1 (231 aa).

The tract at residues 75-99 (SLHPLEGLPPPEKLWRRKRKKLHLE) is interaction with CCNA1 and CCNA1/CDK2 complex; essential for CDK2 inhibitory activity. A Nuclear localization signal motif is present at residues 90–95 (RRKRKK). Thr180 is subject to Phosphothreonine.

The protein belongs to the INCA family. As to quaternary structure, interacts with CCNA1. Identified in a complex with CCNA1 and CDK2. Interacts with ZNF16; the interaction inhibits INCA1 activity and induces the cell cycle process. Interacts with SPACA9. Interacts with CCNA2, CCNB1 and CCNE1. Interacts with the CCNA1/CDK2 complex. Interacts with ING5, DAZAP2, RNF26, USP15, SPOUT1, DPH7, TRIM26 and RAB5C. Post-translationally, phosphorylated when part of a complex with CCNA1 and CDK2.

It localises to the nucleus. The protein localises to the cytoplasm. In terms of biological role, binds to CDK2-bound cyclins and inhibits the kinase activity of CDK2; binding to cyclins is critical for its function as CDK inhibitor. Inhibits cell growth and proliferation and may play a role in cell cycle control. Required for ING5-mediated regulation of S-phase progression, enhancement of Fas-induced apoptosis and inhibition of cell growth. This Mus musculus (Mouse) protein is Protein INCA1 (Inca1).